Reading from the N-terminus, the 193-residue chain is Peptidyl-tRNA hydrolase (193 aa).

TRNA is bound at residue Tyr-14. His-19 (proton acceptor) is an active-site residue. The tRNA site is built by Phe-64, Asn-66, and Asn-112.

It belongs to the PTH family. In terms of assembly, monomer.

It localises to the cytoplasm. The catalysed reaction is an N-acyl-L-alpha-aminoacyl-tRNA + H2O = an N-acyl-L-amino acid + a tRNA + H(+). Its function is as follows. Hydrolyzes ribosome-free peptidyl-tRNAs (with 1 or more amino acids incorporated), which drop off the ribosome during protein synthesis, or as a result of ribosome stalling. In terms of biological role, catalyzes the release of premature peptidyl moieties from peptidyl-tRNA molecules trapped in stalled 50S ribosomal subunits, and thus maintains levels of free tRNAs and 50S ribosomes. The polypeptide is Peptidyl-tRNA hydrolase (Bartonella henselae (strain ATCC 49882 / DSM 28221 / CCUG 30454 / Houston 1) (Rochalimaea henselae)).